The primary structure comprises 267 residues: Tryptophan synthase alpha chain (267 aa).

Active-site proton acceptor residues include Glu49 and Asp60.

It belongs to the TrpA family. As to quaternary structure, tetramer of two alpha and two beta chains.

It catalyses the reaction (1S,2R)-1-C-(indol-3-yl)glycerol 3-phosphate + L-serine = D-glyceraldehyde 3-phosphate + L-tryptophan + H2O. The protein operates within amino-acid biosynthesis; L-tryptophan biosynthesis; L-tryptophan from chorismate: step 5/5. Its function is as follows. The alpha subunit is responsible for the aldol cleavage of indoleglycerol phosphate to indole and glyceraldehyde 3-phosphate. This is Tryptophan synthase alpha chain from Citrifermentans bemidjiense (strain ATCC BAA-1014 / DSM 16622 / JCM 12645 / Bem) (Geobacter bemidjiensis).